The following is a 163-amino-acid chain: Large ribosomal subunit protein uL10 (163 aa).

It belongs to the universal ribosomal protein uL10 family. As to quaternary structure, part of the ribosomal stalk of the 50S ribosomal subunit. The N-terminus interacts with L11 and the large rRNA to form the base of the stalk. The C-terminus forms an elongated spine to which L12 dimers bind in a sequential fashion forming a multimeric L10(L12)X complex.

In terms of biological role, forms part of the ribosomal stalk, playing a central role in the interaction of the ribosome with GTP-bound translation factors. This chain is Large ribosomal subunit protein uL10, found in Glaesserella parasuis serovar 5 (strain SH0165) (Haemophilus parasuis).